A 1919-amino-acid chain; its full sequence is MILKSFLLGNLVSLCMKIINSVVVVGLYYGFLTTFSIGPSYLFLLRARVMEEGEEGTEKKVSATTGFITGQLMMFISIYYAPLHLALGRPHTITVLALPYLLFHFFWNNHKNFFDYGSTTRNSMRNLSIQCVFLNNLIFQLFNHFILPSSMLARLVNIYMFRCNNKMLFVTSSFVGWLIGHILFMKWVGLVLVWIRQNHSIRSNKYIRSNKYLVSELINSMARIFSILLFITCVYYLGRIPSPIITKKLKETPTTEERGESEEETDVEIETPTTEERGESEEETDVEIETPTTEERGESEEETDVEIETPTTEERGESEEETDVEIETASETKGAKQEQEGSTEEDPSPSLFSEEKEDPDKIDETEEIRVNGKEKTKDEFHFTETSYNNSPVYKVSYLYKNQENFNKIKILDKKDEDKGLFWFEKPLVTLLFDYKRWNRPLRYIKNNRFERTARNEMSQYFFYTCRSDGKERISFTYPPSLSTFGEMIQRRMSLPTLEKLSSDELYNHWIYTNKQKKNNLNNEFLNRIKALDMGFLSLDILEKSTRLYNDTKKDYLPKIYDPILNGSYRGTIKKKFSPSIRNKISLENFIETMEINKIHNLLLPDTDYQEFKQKIDPFDKKKRFSTEISHLFTLISKFDRESRSGLNLKGPSLFSENEAKLLKFLLNAIITIANGHKIKQKSFGIKEISKKVPRWSDKFITELEQQTGVIQEGVRVGHQIRSRKIDDIVVFTDNKWNSKNRDKIDLIYTIEYLQESDFRRNIIKGSMRTQRRKTIIWKLFEANAHSPLFLNRRKKSPLFSFDISELMKLIFRNWMGKGAELKDYTEEQTKRREKQEENNIKEKVRIELPEIWDLVPFSKTTRSLLLIIQSMLRKYIILPSLIIVKNIGRILLFQPPEWSEDFHEWKREKHIKCTYNGVQLSETELPANWLTEGIQIKILFPFCLKPWYRSKPKLRPSYRDLKKEQKKDDSCFLTASGMETDLPFGSPRKRTSFFEPIFKDFLALRVLIRRTKHFLQGSKETKRGFIKNVLFLFLKRIKKELSKVNPTLFRLKEVYESGETNQEKGSIISNQTIHNSFNKIRSTDNYSPREKKIKNLTDRTSPIRKKIKSITKEKKKGTPGIKSSPNKRSYNVESPKDIWQILKRRNTRLIWKLQVFLKIFIEKIYIDIFLYIINIARMYTRLVLESTKKIIQKYKYIYNNETNQETINKTNQNTIHFISTIKKSLYNIRNSKKNSHLFFDLSSLSQAYVFYKLSRTRVINLYKLRSVLEYHGTSFFLKTAIKDSFGTQGIFHSELEHTKFPSYGTNQWKNWLRGHYQYNLSQIRWSGLIPQKWRNTINQGRITQKKNLTKWDSKDRLLHYKKQNAFEVYSLPNPNKNENSQKYYRYDLLSYKSINYERKTDPYIIYGSPLQVNNNQRISYNYTTQKQKFFDILEDIPINNYLGKGDIMYMEKNPDRKYFDWKIINFFLREKVDIETWIKMDPNSNKNTKIESKNYQKIDKIHKNQIFYLTLYQDLEKNPLNQKKHLFGWMEMNQEILNRHISNLELWFFPEFVLLYNVYKKKPWIIPSKLLLLNLNRNENVSDNKNINGKQKWNFFRPSNEKKIFELKNRNQEEKEPADRGDLGSDAQNQGNRRFVLSNQQKDIEEDYAKLVLKRGKTKKQSKNKSNVKVELNALLKQHLLFQLRYDEGLKQRMINNLKVSCLLIGLKNPRNITVSSIQNREISLDIMLIRKSLTVRELMKRGVLIIEPIRLSVKKDGQFIMYQTIGISLIHKSKYQTNQRYREQRYIDKKKFDESTPRYQRRTGNRDKNHYDFLVPEKILSSRRRRELRILIHFNSRSRKGVDSNPVFCNKKNIKSRSPFLDESKRFDRDKNELIKLKFFLGPNYRLEDLACINRYWFDTNNGSNFSMLRIYPQLKIR.

A run of 6 helical transmembrane segments spans residues 18-38 (IINS…FSIG), 67-87 (FITG…HLAL), 90-110 (PHTI…WNNH), 127-147 (LSIQ…HFIL), 175-195 (VGWL…LVWI), and 224-244 (IFSI…PSPI). 3 disordered regions span residues 250–375 (KETP…GKEK), 1107–1129 (IKSI…NKRS), and 1606–1636 (ELKN…RRFV). Acidic residues-rich tracts occupy residues 259-269 (GESEEETDVEI), 278-288 (GESEEETDVEI), 297-307 (GESEEETDVEI), 316-328 (GESE…EIET), and 355-366 (EKEDPDKIDETE). A compositionally biased stretch (basic residues) spans 1107–1117 (IKSITKEKKKG). The segment covering 1606–1623 (ELKNRNQEEKEPADRGDL) has biased composition (basic and acidic residues). Positions 1626–1636 (DAQNQGNRRFV) are enriched in polar residues.

Belongs to the TIC214 family. As to quaternary structure, part of the Tic complex.

It is found in the plastid. It localises to the chloroplast inner membrane. Functionally, involved in protein precursor import into chloroplasts. May be part of an intermediate translocation complex acting as a protein-conducting channel at the inner envelope. This chain is Protein TIC 214, found in Panax ginseng (Korean ginseng).